The sequence spans 547 residues: Nitrate transporter 2.1 (547 aa).

Helical transmembrane passes span 53-73, 86-106, 113-133, 143-163, 173-193, 211-231, 262-280, 296-316, 338-358, 366-386, 400-420, and 433-453; these read WICFFMSFVATFAPASLAPII, NAGVAAVCGAIAARIFMGIVV, YGAAATMLMTAPAVFCMALVT, FFIGLSLCMFVCCQFWCGTMF, AIAAGWGNMGGGACHFIMPLI, AFFVPGGIYILTATLTLLLGI, LGNYRSWILALTYGYSFGV, FGLNLAVAGALGAIFGLMNLF, IWALWIIQTLGGIFCIVLGKV, IVIMIVFSIFCQQACGLHFGI, GLVGAGGNTGAAITQAIWFAG, and GFVYMGIMTIGLTLPLFFIWF.

It belongs to the major facilitator superfamily. Nitrate/nitrite porter (TC 2.A.1.8) family.

Its subcellular location is the cell membrane. Nitrite transport mediated by system 1 is very sensitive to inhibition by nitrate. Functionally, involved in nitrate transport, but does not seem to be able to mediate transport by its own. Acts as a dual component transporter with NAR2 (system 1). Imports nitrate with high affinity when expressed with NAR2 in a heterologous system (Xenopus oocytes). Involved in a high affinity and a high capacity transport specific for both nitrate and nitrite. The sequence is that of Nitrate transporter 2.1 from Chlamydomonas reinhardtii (Chlamydomonas smithii).